A 674-amino-acid chain; its full sequence is U-box domain-containing protein 16 (674 aa).

Residues 273-347 (NIPADFRCPI…VLWCRDQKIP (75 aa)) enclose the U-box domain. 3 ARM repeats span residues 399–438 (TVARACIAEAGAIPKLVRYLATECPSLQINAVTTILNLSI), 441–481 (QNKT…SLAG), and 484–523 (AYRRRLGRKARVVSGLVDLAKQGPTSSKRDALVAILNLVA).

It catalyses the reaction S-ubiquitinyl-[E2 ubiquitin-conjugating enzyme]-L-cysteine + [acceptor protein]-L-lysine = [E2 ubiquitin-conjugating enzyme]-L-cysteine + N(6)-ubiquitinyl-[acceptor protein]-L-lysine.. It participates in protein modification; protein ubiquitination. Its function is as follows. Functions as an E3 ubiquitin ligase. The sequence is that of U-box domain-containing protein 16 (PUB16) from Arabidopsis thaliana (Mouse-ear cress).